Consider the following 126-residue polypeptide: Lymphocyte antigen 6E (126 aa).

The signal sequence occupies residues 1–20 (MKAFLFAVLAAVLCVERAHT). Residues 21–98 (LICFSCSDAS…CCDSFLCNIS (78 aa)) enclose the UPAR/Ly6 domain. Cystine bridges form between Cys-23-Cys-48, Cys-26-Cys-35, Cys-41-Cys-69, Cys-73-Cys-89, and Cys-90-Cys-95. N-linked (GlcNAc...) asparagine glycosylation occurs at Asn-96. Ser-98 carries the GPI-anchor amidated serine lipid modification. A propeptide spans 99 to 126 (GSSSVKASYAVLALGILVSFVYVLRARE) (removed in mature form).

As to expression, expressed by thymic blast cells.

Its subcellular location is the cell membrane. The chain is Lymphocyte antigen 6E (LY6E) from Gallus gallus (Chicken).